Consider the following 178-residue polypeptide: NADH-quinone oxidoreductase subunit B (178 aa).

Residues Cys45, Cys46, Cys111, and Cys140 each coordinate [4Fe-4S] cluster.

This sequence belongs to the complex I 20 kDa subunit family. In terms of assembly, NDH-1 is composed of 15 different subunits. Subunits NuoB, C, D, E, F, and G constitute the peripheral sector of the complex. It depends on [4Fe-4S] cluster as a cofactor.

It localises to the cell membrane. It carries out the reaction a quinone + NADH + 5 H(+)(in) = a quinol + NAD(+) + 4 H(+)(out). Its function is as follows. NDH-1 shuttles electrons from NADH, via FMN and iron-sulfur (Fe-S) centers, to quinones in the respiratory chain. The immediate electron acceptor for the enzyme in this species is believed to be a menaquinone. Couples the redox reaction to proton translocation (for every two electrons transferred, four hydrogen ions are translocated across the cytoplasmic membrane), and thus conserves the redox energy in a proton gradient. This chain is NADH-quinone oxidoreductase subunit B, found in Deinococcus geothermalis (strain DSM 11300 / CIP 105573 / AG-3a).